We begin with the raw amino-acid sequence, 185 residues long: Ribosome-recycling factor (185 aa).

This sequence belongs to the RRF family.

The protein resides in the cytoplasm. Functionally, responsible for the release of ribosomes from messenger RNA at the termination of protein biosynthesis. May increase the efficiency of translation by recycling ribosomes from one round of translation to another. This Roseiflexus sp. (strain RS-1) protein is Ribosome-recycling factor.